Consider the following 274-residue polypeptide: 2,3,4,5-tetrahydropyridine-2,6-dicarboxylate N-succinyltransferase (274 aa).

R107 and D144 together coordinate substrate.

This sequence belongs to the transferase hexapeptide repeat family. Homotrimer.

It is found in the cytoplasm. The catalysed reaction is (S)-2,3,4,5-tetrahydrodipicolinate + succinyl-CoA + H2O = (S)-2-succinylamino-6-oxoheptanedioate + CoA. It participates in amino-acid biosynthesis; L-lysine biosynthesis via DAP pathway; LL-2,6-diaminopimelate from (S)-tetrahydrodipicolinate (succinylase route): step 1/3. This is 2,3,4,5-tetrahydropyridine-2,6-dicarboxylate N-succinyltransferase from Cereibacter sphaeroides (strain ATCC 17029 / ATH 2.4.9) (Rhodobacter sphaeroides).